The chain runs to 177 residues: Large ribosomal subunit protein uL10 (177 aa).

The protein belongs to the universal ribosomal protein uL10 family. Part of the ribosomal stalk of the 50S ribosomal subunit. The N-terminus interacts with L11 and the large rRNA to form the base of the stalk. The C-terminus forms an elongated spine to which L12 dimers bind in a sequential fashion forming a multimeric L10(L12)X complex.

In terms of biological role, forms part of the ribosomal stalk, playing a central role in the interaction of the ribosome with GTP-bound translation factors. The protein is Large ribosomal subunit protein uL10 of Variovorax paradoxus (strain S110).